We begin with the raw amino-acid sequence, 557 residues long: CTP synthase (557 aa).

The amidoligase domain stretch occupies residues 1 to 267; it reads MAKYIFVTGG…GAYLTQRLGL (267 aa). Serine 13 lines the CTP pocket. Serine 13 serves as a coordination point for UTP. Residue 14 to 19 participates in ATP binding; that stretch reads SVGKGI. Tyrosine 54 contacts L-glutamine. Aspartate 71 lines the ATP pocket. The Mg(2+) site is built by aspartate 71 and glutamate 141. CTP contacts are provided by residues 148-150, 188-193, and lysine 224; these read DIE and KTKPTQ. UTP-binding positions include 188–193 and lysine 224; that span reads KTKPTQ. The region spanning 292–535 is the Glutamine amidotransferase type-1 domain; sequence AIALVGKYVE…VAAAAKTFRE (244 aa). Glycine 354 contacts L-glutamine. The active-site Nucleophile; for glutamine hydrolysis is the cysteine 381. Residues 382 to 385, glutamate 406, and arginine 463 contribute to the L-glutamine site; that span reads LGMQ. Catalysis depends on residues histidine 508 and glutamate 510. Residues 536 to 557 form a disordered region; that stretch reads GDQRPLPLEQNGAVTEHEPHSR.

This sequence belongs to the CTP synthase family. As to quaternary structure, homotetramer.

It carries out the reaction UTP + L-glutamine + ATP + H2O = CTP + L-glutamate + ADP + phosphate + 2 H(+). It catalyses the reaction L-glutamine + H2O = L-glutamate + NH4(+). The enzyme catalyses UTP + NH4(+) + ATP = CTP + ADP + phosphate + 2 H(+). It functions in the pathway pyrimidine metabolism; CTP biosynthesis via de novo pathway; CTP from UDP: step 2/2. Allosterically activated by GTP, when glutamine is the substrate; GTP has no effect on the reaction when ammonia is the substrate. The allosteric effector GTP functions by stabilizing the protein conformation that binds the tetrahedral intermediate(s) formed during glutamine hydrolysis. Inhibited by the product CTP, via allosteric rather than competitive inhibition. Catalyzes the ATP-dependent amination of UTP to CTP with either L-glutamine or ammonia as the source of nitrogen. Regulates intracellular CTP levels through interactions with the four ribonucleotide triphosphates. The sequence is that of CTP synthase from Roseiflexus sp. (strain RS-1).